Reading from the N-terminus, the 549-residue chain is MKNINPTQTSAWQALQKHYDEMKDVTIAELFANDSDRFAKFSATFDDLMLVDFSKNRITEETLAKLQDLAKETDLAGAIKSMFSGEKINRTEDRAVLHVALRNRSNTPIIVDGKDVMPEVNAVLEKMKTFSQAIISGQWKGYTGKAITDVVNIGIGGSDLGPFMVTEALRPYKNHLTMHFVSNVDGTHIAEVLKKVNPETTLFLVASKTFTTQETMTNAHSARDWFLKTAGDEKHVAKHFAALSTNAKAVGEFGIDTANMFEFWDWVGGRYSLWSAIGLSIILSVGFDNFVELLSGAHAMDKHFSTTPAEKNLPILLALIGIWYNNFFGAETEAILPYDQYMHRFAAYFQQGNMESNGKYVDRNGNAVDYQTGPIIWGEPGTNGQHAFYQLIHQGTKMVPCDFIAPAITHNPLSDHHQKLLSNFFAQTEALAFGKSREVVEQEYRDQGKDPAQLEHVVPFKVFEGNRPTNSILLREITPFSLGALIALYEHKIFTQGAILNIFTFDQWGVELGKQLANRILPELGDDKAISSHDSSTNGLINRYKAWRA.

Catalysis depends on glutamate 355, which acts as the Proton donor. Catalysis depends on residues histidine 386 and lysine 514.

It belongs to the GPI family.

Its subcellular location is the cytoplasm. The enzyme catalyses alpha-D-glucose 6-phosphate = beta-D-fructose 6-phosphate. It functions in the pathway carbohydrate biosynthesis; gluconeogenesis. The protein operates within carbohydrate degradation; glycolysis; D-glyceraldehyde 3-phosphate and glycerone phosphate from D-glucose: step 2/4. In terms of biological role, catalyzes the reversible isomerization of glucose-6-phosphate to fructose-6-phosphate. This is Glucose-6-phosphate isomerase from Salmonella enteritidis PT4 (strain P125109).